A 926-amino-acid polypeptide reads, in one-letter code: UvrABC system protein A (926 aa).

31-38 (GPSGSGKS) serves as a coordination point for ATP. The C4-type zinc finger occupies 251–278 (CPEHGFSIPELSARLFSFNSPYGACPSC). 2 ABC transporter domains span residues 308 to 568 (SGYF…PSSL) and 588 to 916 (PSGK…KYLR). ATP is bound at residue 620-627 (GVSGSGKS). The C4-type zinc finger occupies 719–745 (CEACQGEGVIKVEMHFLPPVYVTCEVC).

This sequence belongs to the ABC transporter superfamily. UvrA family. As to quaternary structure, forms a heterotetramer with UvrB during the search for lesions.

It is found in the cytoplasm. Its function is as follows. The UvrABC repair system catalyzes the recognition and processing of DNA lesions. UvrA is an ATPase and a DNA-binding protein. A damage recognition complex composed of 2 UvrA and 2 UvrB subunits scans DNA for abnormalities. When the presence of a lesion has been verified by UvrB, the UvrA molecules dissociate. This chain is UvrABC system protein A, found in Aquifex aeolicus (strain VF5).